Reading from the N-terminus, the 646-residue chain is P-selectin (646 aa).

The first 41 residues, 1-41, serve as a signal peptide directing secretion; sequence MASCPKAIWNWRFQRAVFRTVQLLCFSVLIFEVINQKEVSA. The Extracellular segment spans residues 42–587; it reads WTYHYSNKTY…QAGPLTIQET (546 aa). Residues asparagine 48, asparagine 54, and asparagine 80 are each glycosylated (N-linked (GlcNAc...) asparagine). The 101-residue stretch at 58 to 158 folds into the C-type lectin domain; sequence AFCQKYYTDL…PCWKRKRALC (101 aa). 17 disulfides stabilise this stretch: cysteine 60–cysteine 158, cysteine 131–cysteine 150, cysteine 163–cysteine 174, cysteine 168–cysteine 183, cysteine 185–cysteine 194, cysteine 200–cysteine 244, cysteine 230–cysteine 257, cysteine 262–cysteine 306, cysteine 292–cysteine 319, cysteine 324–cysteine 368, cysteine 354–cysteine 381, cysteine 386–cysteine 430, cysteine 416–cysteine 443, cysteine 458–cysteine 502, cysteine 488–cysteine 515, cysteine 520–cysteine 564, and cysteine 550–cysteine 577. Glutamate 121, asparagine 123, and asparagine 124 together coordinate Ca(2+). Position 123 (asparagine 123) interacts with a carbohydrate. A carbohydrate is bound by residues glutamate 133 and asparagine 146. Ca(2+)-binding residues include asparagine 146 and aspartate 147. Residues 159–195 enclose the EGF-like domain; it reads YRASCQDMSCSKQGECIETIGNYTCSCYPGFYGPECE. The N-linked (GlcNAc...) asparagine glycan is linked to asparagine 180. Sushi domains lie at 198–259, 260–321, 322–383, 384–445, 456–517, and 518–579; these read RECG…QCVA, VQCP…VCKA, LQCQ…ECQA, VTCA…TCEE, VQCP…TCRA, and VKCA…TCQA. N-linked (GlcNAc...) asparagine glycans are attached at residues asparagine 212 and asparagine 219. Asparagine 336 is a glycosylation site (N-linked (GlcNAc...) asparagine). N-linked (GlcNAc...) asparagine glycosylation is present at asparagine 481. 3 N-linked (GlcNAc...) asparagine glycosylation sites follow: asparagine 532, asparagine 539, and asparagine 557. Residues 588-611 form a helical membrane-spanning segment; that stretch reads LTYVGGAAAGTTGLVTGSILLALL. Residues 612 to 646 lie on the Cytoplasmic side of the membrane; it reads RRRCRQKDDGKSPLNPQSHLGTYGVFTNAAFDPSP. Positions 634–637 match the Endocytosis signal motif; that stretch reads YGVF. The segment at 637 to 646 is interaction with SNX17; sequence FTNAAFDPSP.

Belongs to the selectin/LECAM family. As to quaternary structure, interacts with SNX17. Interacts with SELPLG/PSGL1 and PODXL2 and mediates neutrophil adhesion and leukocyte rolling. This interaction requires the sialyl-Lewis X epitope of SELPLG and PODXL2, and specific tyrosine sulfation on SELPLG. Interacts (via C-type lectin domain) with alpha-IIb/beta3 integrin ITGA2B:ITGB3 and alpha-V/beta-3 integrin ITGAV:ITGB3. Interacts with alpha5/beta1 integrin ITGA5:ITGB1 and alpha4/beta1 integrin ITGA4:ITGB. In terms of tissue distribution, stored in the alpha-granules of platelets and Weibel-Palade bodies of endothelial cells. Upon cell activation by agonists, P-selectin is transported rapidly to the cell surface.

It localises to the cell membrane. In terms of biological role, ca(2+)-dependent receptor for myeloid cells that binds to carbohydrates on neutrophils and monocytes. Mediates the interaction of activated endothelial cells or platelets with leukocytes. The ligand recognized is sialyl-Lewis X. Mediates rapid rolling of leukocyte rolling over vascular surfaces during the initial steps in inflammation through interaction with SELPLG. Mediates cell-cell interactions and cell adhesion via the interaction with integrin alpha-IIb/beta3 (ITGA2B:ITGB3) and integrin alpha-V/beta-3 (ITGAV:ITGB3). This is P-selectin (SELP) from Bos taurus (Bovine).